A 499-amino-acid chain; its full sequence is DAZ protein 1 (499 aa).

Residues 1–29 (MMSPPLRYQKDQQNQQHQQNQSQQAAHQM) are disordered. Low complexity predominate over residues 12–28 (QQNQQHQQNQSQQAAHQ). One can recognise an RRM domain in the interval 66–144 (PNRIFVGGFP…SRKLNLGPAI (79 aa)). Low complexity predominate over residues 195 to 224 (FVYPPLRSQDQSRQQSEQQTTPQNSPTNLQ). Disordered stretches follow at residues 195–304 (FVYP…NNGG) and 406–499 (YPGN…TKNN). Positions 214 to 236 (TTPQNSPTNLQHQQSPQVFFGGD) constitute a DAZ domain. Basic and acidic residues predominate over residues 251–262 (EKSEVSPEKHES). A compositionally biased stretch (polar residues) spans 263–279 (VSPQPLLPNQNVLNTQY). A compositionally biased stretch (low complexity) spans 280-304 (SQGQQQWNSNVQQQQQQQMDSNNGG). The segment covering 406–425 (YPGNFSQQHTMGNNENTFSL) has biased composition (polar residues). The span at 438 to 447 (KPSECQDKKT) shows a compositional bias: basic and acidic residues. A compositionally biased stretch (low complexity) spans 480 to 499 (LSPLSASLQSLAISSPTKNN).

This sequence belongs to the RRM DAZ family. In terms of tissue distribution, germline specific. More strongly expressed during oogenesis than during spermatogenesis. During the larval stages, it is more abundant at the distal region than the proximal region of the gonad. In young adult hermaphrodites, it is expressed at a very low level in the distal mitotic region of the gonad, and begins to accumulate in the meiotic transition zone. Highly expressed in the proximal pachytene region. Not expressed in mature oocytes. Not expressed in the spermatheca. Weakly or not expressed in the germline of adult males.

RNA-binding protein that plays a central role in oogenesis, but not for spermatogenesis. Required for meiotic entry and germline differentiation, at the pachytene stage of meiosis I of female germline regardless of the sex of the soma. May act by regulating translation of specific mRNAs, possibly by binding to their 3'-UTR. The sequence is that of DAZ protein 1 (daz-1) from Caenorhabditis elegans.